The primary structure comprises 65 residues: Large ribosomal subunit protein bL35 (65 aa).

This sequence belongs to the bacterial ribosomal protein bL35 family.

The protein is Large ribosomal subunit protein bL35 of Porphyromonas gingivalis (strain ATCC 33277 / DSM 20709 / CIP 103683 / JCM 12257 / NCTC 11834 / 2561).